The sequence spans 146 residues: Mitochondrial pyruvate carrier 3 (146 aa).

Residues 1–20 (MSASAFNFAFRRFWNSETGP) constitute a mitochondrion transit peptide. 3 helical membrane-spanning segments follow: residues 23–39 (VHFW…FAGL), 55–71 (LSLL…SFVI), and 78–94 (LASV…YHLT).

The protein belongs to the mitochondrial pyruvate carrier (MPC) (TC 2.A.105) family. In terms of assembly, the functional 150 kDa pyruvate import complex is a heteromer of MPC1 and either MPC2 or MPC3.

It is found in the mitochondrion. It localises to the mitochondrion inner membrane. Its function is as follows. Mediates the uptake of pyruvate into mitochondria. This chain is Mitochondrial pyruvate carrier 3, found in Saccharomyces cerevisiae (strain ATCC 204508 / S288c) (Baker's yeast).